Reading from the N-terminus, the 696-residue chain is Neurogenic protein big brain (696 aa).

The Cytoplasmic segment spans residues 1-71 (MADESLHTVP…LEFWRSIISE (71 aa)). Ser46 is modified (phosphoserine). Thr47 bears the Phosphothreonine mark. Residues 72–93 (CLASFMYVFIVCGAAAGVGVGA) traverse the membrane as a helical segment. Topologically, residues 94 to 97 (SVSS) are extracellular. Residues 98-118 (VLLATALASGLAMATLTQCFL) form a helical membrane-spanning segment. The Cytoplasmic segment spans residues 119–143 (HISGAHINPAVTLALCVVRSISPIR). An NPA 1 motif is present at residues 126–128 (NPA). Residues 144-167 (AAMYITAQCGGGIAGAALLYGVTV) form a helical membrane-spanning segment. At 168-189 (PGYQGNLQAAISHSAALAAWER) the chain is on the extracellular side. A helical transmembrane segment spans residues 190–208 (FGVEFILTFLVVLCYFVST). The Cytoplasmic segment spans residues 209-213 (DPMKK). The chain crosses the membrane as a helical span at residues 214 to 234 (FMGNSAASIGCAYSACCFVSM). Residues 235-256 (PYLNPARSLGPSFVLNKWDSHW) lie on the Extracellular side of the membrane. The NPA 2 motif lies at 238–240 (NPA). Residues 257 to 273 (VYWFGPLVGGMASGLVY) form a helical membrane-spanning segment. Tyr273 carries the post-translational modification Phosphotyrosine; by Src. Residues 274–696 (EYIFNSRNRN…HYGMLPLRPN (423 aa)) are Cytoplasmic-facing. Position 300 is a phosphoserine (Ser300). A disordered region spans residues 314–345 (NKYQQSQGTYPRGQSNGNGGGQAAGNGQHQAA). Tyr367 carries the post-translational modification Phosphotyrosine; by Abl. Tyr384 carries the phosphotyrosine; by Src modification. Ser394 carries the post-translational modification Phosphoserine. 2 disordered regions span residues 436-634 (MRTQ…KVSA) and 650-696 (TSQG…LRPN). Composition is skewed to low complexity over residues 439-451 (QQQQ…QQQQ) and 462-472 (QNQNVQNQMQQ). Position 478 is a phosphotyrosine; by Src (Tyr478). Positions 487–532 (QQQPIQQQQQQQQQQQLQQQQPNMGVQQQQMQPPPQMMSDPQQQPQ) are enriched in low complexity. A compositionally biased stretch (basic and acidic residues) spans 549-558 (GNHKYDRRDP). Ser576 is modified (phosphoserine). The segment covering 576-587 (SDDSSYGSYHGS) has biased composition (low complexity). The segment covering 599-616 (EPSPPPPPMLMYAPPPQP) has biased composition (pro residues). Phosphotyrosine; by Abl is present on Tyr610. Residues 659-686 (QQQQQQQQQQQQQQQQQQQQMMMQQQQQ) are compositionally biased toward low complexity.

Belongs to the MIP/aquaporin (TC 1.A.8) family. Post-translationally, phosphorylated at its C-terminus. Detected in all tissues with neurogenic abilities, for example the neurogenic ectoderm.

It localises to the membrane. Functionally, essential for proper differentiation of ectoderm. Acts synergistically with neurogenic locus proteins Notch and Delta during the separation of neural and epidermal cell lineages in response to the lateral inhibition signal. Voltage-insensitive monovalent cation channel. Ion transport is blocked by the presence of divalent cations. This Drosophila melanogaster (Fruit fly) protein is Neurogenic protein big brain (bib).